The chain runs to 443 residues: ATP-dependent protease ATPase subunit HslU (443 aa).

ATP-binding positions include I20, G62 to E67, D255, E321, and R393.

Belongs to the ClpX chaperone family. HslU subfamily. A double ring-shaped homohexamer of HslV is capped on each side by a ring-shaped HslU homohexamer. The assembly of the HslU/HslV complex is dependent on binding of ATP.

It localises to the cytoplasm. ATPase subunit of a proteasome-like degradation complex; this subunit has chaperone activity. The binding of ATP and its subsequent hydrolysis by HslU are essential for unfolding of protein substrates subsequently hydrolyzed by HslV. HslU recognizes the N-terminal part of its protein substrates and unfolds these before they are guided to HslV for hydrolysis. The protein is ATP-dependent protease ATPase subunit HslU of Helicobacter pylori (strain P12).